The following is a 73-amino-acid chain: DNA gyrase inhibitor YacG (73 aa).

Residues cysteine 14, cysteine 17, cysteine 30, and cysteine 34 each coordinate Zn(2+). The tract at residues 54–73 (AEQADDTAGPGAAEDDTDSH) is disordered.

It belongs to the DNA gyrase inhibitor YacG family. In terms of assembly, interacts with GyrB. It depends on Zn(2+) as a cofactor.

Functionally, inhibits all the catalytic activities of DNA gyrase by preventing its interaction with DNA. Acts by binding directly to the C-terminal domain of GyrB, which probably disrupts DNA binding by the gyrase. The protein is DNA gyrase inhibitor YacG of Hyphomonas neptunium (strain ATCC 15444).